The primary structure comprises 520 residues: Amine oxidase [flavin-containing] B (520 aa).

Ser-2 is modified (N-acetylserine). At 2-489 (SGKCDVVVVG…TFLERHLPSV (488 aa)) the chain is on the cytoplasmic side. N6-acetyllysine is present on Lys-52. Residue Cys-397 is modified to S-8alpha-FAD cysteine. A helical; Anchor for type IV membrane protein membrane pass occupies residues 490-516 (PGLLRLIGLTAIFSATALGVLAHKRGL). Residues 517 to 520 (LVRV) lie on the Mitochondrial intermembrane side of the membrane.

Belongs to the flavin monoamine oxidase family. As to quaternary structure, monomer, homo- or heterodimer (containing two subunits of similar size). Each subunit contains a covalently bound flavin. Enzymatically active as monomer. FAD is required as a cofactor.

Its subcellular location is the mitochondrion outer membrane. It catalyses the reaction a secondary aliphatic amine + O2 + H2O = a primary amine + an aldehyde + H2O2. The catalysed reaction is (R)-adrenaline + O2 + H2O = (R)-3,4-dihydroxymandelaldehyde + methylamine + H2O2. It carries out the reaction a primary methyl amine + O2 + H2O = an aldehyde + H2O2 + NH4(+). The enzyme catalyses benzylamine + O2 + H2O = benzaldehyde + H2O2 + NH4(+). It catalyses the reaction dopamine + O2 + H2O = 3,4-dihydroxyphenylacetaldehyde + H2O2 + NH4(+). The catalysed reaction is tyramine + O2 + H2O = (4-hydroxyphenyl)acetaldehyde + H2O2 + NH4(+). It carries out the reaction (R)-noradrenaline + O2 + H2O = (R)-3,4-dihydroxymandelaldehyde + H2O2 + NH4(+). The enzyme catalyses 2-phenylethylamine + O2 + H2O = 2-phenylacetaldehyde + H2O2 + NH4(+). It catalyses the reaction N-acetylputrescine + O2 + H2O = 4-acetamidobutanal + H2O2 + NH4(+). In terms of biological role, catalyzes the oxidative deamination of primary and some secondary amines such as neurotransmitters, and exogenous amines including the tertiary amine, neurotoxin 1-methyl-4-phenyl-1,2,3,6-tetrahydropyridine (MPTP), with concomitant reduction of oxygen to hydrogen peroxide and participates in the metabolism of neuroactive and vasoactive amines in the central nervous system and peripheral tissues. Preferentially degrades benzylamine and phenylethylamine. This is Amine oxidase [flavin-containing] B from Canis lupus familiaris (Dog).